A 50-amino-acid polypeptide reads, in one-letter code: Large ribosomal subunit protein bL32c (50 aa).

Belongs to the bacterial ribosomal protein bL32 family.

Its subcellular location is the plastid. This is Large ribosomal subunit protein bL32c (rpl32) from Euglena longa (Euglenophycean alga).